We begin with the raw amino-acid sequence, 513 residues long: MQLNPSEISELIKSRIQGLEASADVRNQGTVISVTDGIVRIHGLSDVMQGEMLEFPGNTFGLALNLERDSVGAVILGEYEHISEGDIVKTTGRILEVPVGPELVGRVVDALGNPIDGKGPVNAKLTDAIEKIAPGVIWRKSVSQPVQTGIKSIDAMVPIGRGQRELIIGDRQCGKTAVALDAIINQKGKDLICIYVAIGQKASSIMNVVRKLEETGAMEYTIVVAASASDSAAMQYLAPYAGCTMGEYFRDRGQDALIIYDDLTKQAWAYRQISLLLRRPPGREAYPGDVFYLHSRLLERAARVSEEYVEKFTNGEVKGKSGSLTALPVIETQAGDVTAFVPTNVISITDGQIFLETDLFNAGIRPAINAGVSVSRVGGAAQTKVVKKLSGGIRTDLAQYRELAAFAQFASDLDEATRKQLERGRRVTELLKQPQYQPLQVWELAVSLYAANNGYLDDLDVKQVLPFEKGLRDNLKTSHADLIKRIEDTKDLSKDDEGALRSAIEAFKKSGAY.

An ATP-binding site is contributed by 169–176 (GDRQCGKT).

Belongs to the ATPase alpha/beta chains family. F-type ATPases have 2 components, CF(1) - the catalytic core - and CF(0) - the membrane proton channel. CF(1) has five subunits: alpha(3), beta(3), gamma(1), delta(1), epsilon(1). CF(0) has three main subunits: a(1), b(2) and c(9-12). The alpha and beta chains form an alternating ring which encloses part of the gamma chain. CF(1) is attached to CF(0) by a central stalk formed by the gamma and epsilon chains, while a peripheral stalk is formed by the delta and b chains.

It localises to the cell inner membrane. The enzyme catalyses ATP + H2O + 4 H(+)(in) = ADP + phosphate + 5 H(+)(out). Functionally, produces ATP from ADP in the presence of a proton gradient across the membrane. The alpha chain is a regulatory subunit. This chain is ATP synthase subunit alpha, found in Burkholderia orbicola (strain AU 1054).